The primary structure comprises 152 residues: Ninjurin-1 (152 aa).

An N-acetylmethionine modification is found at M1. Residues 1 to 26 (MDSGTEEYELNGGLPPGTPGSPDASP) form a disordered region. Residues 1-78 (MDSGTEEYEL…EQGPSFAFYV (78 aa)) are Extracellular-facing. Residues S21 and S25 each carry the phosphoserine modification. An N-terminal adhesion motif region spans residues 26 to 37 (PARWGWRHGPIN). A required to induce plasma membrane rupture region spans residues 40–69 (HYASKKSAAESMLDIALLMANASQLKAVVE). The tract at residues 44 to 55 (KKSAAESMLDIA) is helix alpha1. The interval 58–74 (MANASQLKAVVEQGPSF) is helix alpha2. N-linked (GlcNAc...) asparagine glycosylation occurs at N60. Residues 79–103 (PLVVLISISLVLQIGVGVLLIFLVK) form a helical membrane-spanning segment. Residues 104–113 (YDLNNPAKHA) lie on the Cytoplasmic side of the membrane. Residues 114–138 (KLDFLNNLATGLVFIIVVVNIFITA) form a helical membrane-spanning segment. At 139 to 152 (FGVQKPLMDMAPQQ) the chain is on the extracellular side.

The protein belongs to the ninjurin family. In terms of assembly, homodimer; in absence of death stimuli, forms an inactive homodimer. Homooligomer; in response to death stimuli, homooligomerizes into long, highly branched filaments and large, ring-shaped structures in the membrane. In terms of processing, cleaved by MMP9 protease to generate the Secreted ninjurin-1 form. Post-translationally, N-linked glycosylation is required for homooligomerization. Widely expressed in both adult and embryonic tissues, primarily those of epithelial origin.

The protein localises to the cell membrane. Its subcellular location is the synaptic cell membrane. The protein resides in the secreted. Its activity is regulated as follows. In response to death stimuli, homooligomerizes and disrupts membrane integrity by introducing the hydrophilic faces of alpha1 and alpha2 helices into the hydrophobic membrane. Homooligomerization and ability to mediate plasma membrane rupture is inhibited by glycine; it is unclear whether glycine directly or indirectly inhibits homooligomerization. In normal conditions, NINJ1 is autoinhibited via formation of a homodimer: in the inactive homodimer, the alpha1 and alpha2 helices (residues 44-74) form a single transmembrane region without a kink, in which hydrophilic faces of alpha1 and alpha2 helices are sequestered. Functionally, effector of various programmed cell death, such as pyroptosis and necroptosis, which mediates plasma membrane rupture (cytolysis). Oligomerizes in response to death stimuli and forms ring-like structures on the plasma membrane: acts by cutting and shedding membrane disks, like a cookie cutter, leading to membrane damage and loss that cannot be repaired by the cell. Plasma membrane rupture leads to release intracellular molecules named damage-associated molecular patterns (DAMPs) that propagate the inflammatory response. Mechanistically, mediates plasma membrane rupture by introducing hydrophilic faces of 2 alpha helices into the hydrophobic membrane. Induces plasma membrane rupture downstream of Gasdermin (GSDMA, GSDMB, GSDMC, GSDMD, or GSDME) or MLKL during pyroptosis or necroptosis, respectively. Acts as an effector of PANoptosis downstream of CASP1, CASP4, CASP8 and RIPK3. Also induces plasma membrane rupture in response to cell swelling caused by osmotic stress and ferroptosis downstream of lipid peroxidation. Acts as a regulator of Toll-like receptor 4 (TLR4) signaling triggered by lipopolysaccharide (LPS) during systemic inflammation; directly binds LPS. Involved in leukocyte migration during inflammation by promoting transendothelial migration of macrophages via homotypic binding. Promotes the migration of monocytes across the brain endothelium to central nervous system inflammatory lesions. Also acts as a homophilic transmembrane adhesion molecule involved in various processes such as axonal growth, cell chemotaxis and angiogenesis. Promotes cell adhesion by mediating homophilic interactions via its extracellular N-terminal adhesion motif (N-NAM). Involved in the progression of the inflammatory stress by promoting cell-to-cell interactions between immune cells and endothelial cells. Plays a role in nerve regeneration by promoting maturation of Schwann cells. Acts as a regulator of angiogenesis. Promotes the formation of new vessels by mediating the interaction between capillary pericyte cells and endothelial cells. Promotes osteoclasts development by enhancing the survival of prefusion osteoclasts. Also involved in striated muscle growth and differentiation. In terms of biological role, secreted form generated by cleavage, which has chemotactic activity. Acts as an anti-inflammatory mediator by promoting monocyte recruitment, thereby ameliorating atherosclerosis. The protein is Ninjurin-1 of Homo sapiens (Human).